The primary structure comprises 175 residues: Small ribosomal subunit protein uS4 (175 aa).

An S4 RNA-binding domain is found at arginine 105 to alanine 169.

It belongs to the universal ribosomal protein uS4 family. Part of the 30S ribosomal subunit. Contacts protein S5. The interaction surface between S4 and S5 is involved in control of translational fidelity.

One of the primary rRNA binding proteins, it binds directly to 16S rRNA where it nucleates assembly of the body of the 30S subunit. Its function is as follows. With S5 and S12 plays an important role in translational accuracy. The polypeptide is Small ribosomal subunit protein uS4 (Haloquadratum walsbyi (strain DSM 16790 / HBSQ001)).